The sequence spans 207 residues: Octanoyltransferase (207 aa).

The BPL/LPL catalytic domain occupies 27-203; that stretch reads ADTEDELWVV…HLETQFTPKA (177 aa). Residues 66–73, 133–135, and 146–148 each bind substrate; these read RGGQITYH, SLG, and GLA. Cysteine 164 serves as the catalytic Acyl-thioester intermediate.

Belongs to the LipB family.

It is found in the cytoplasm. It carries out the reaction octanoyl-[ACP] + L-lysyl-[protein] = N(6)-octanoyl-L-lysyl-[protein] + holo-[ACP] + H(+). It participates in protein modification; protein lipoylation via endogenous pathway; protein N(6)-(lipoyl)lysine from octanoyl-[acyl-carrier-protein]: step 1/2. Catalyzes the transfer of endogenously produced octanoic acid from octanoyl-acyl-carrier-protein onto the lipoyl domains of lipoate-dependent enzymes. Lipoyl-ACP can also act as a substrate although octanoyl-ACP is likely to be the physiological substrate. In Neisseria meningitidis serogroup B (strain ATCC BAA-335 / MC58), this protein is Octanoyltransferase.